The sequence spans 367 residues: 2-aminoethylphosphonate--pyruvate transaminase (367 aa).

K194 carries the post-translational modification N6-(pyridoxal phosphate)lysine.

Belongs to the class-V pyridoxal-phosphate-dependent aminotransferase family. PhnW subfamily. Homodimer. The cofactor is pyridoxal 5'-phosphate.

It carries out the reaction (2-aminoethyl)phosphonate + pyruvate = phosphonoacetaldehyde + L-alanine. Its function is as follows. Involved in phosphonate degradation. This Klebsiella pneumoniae subsp. pneumoniae (strain ATCC 700721 / MGH 78578) protein is 2-aminoethylphosphonate--pyruvate transaminase.